We begin with the raw amino-acid sequence, 148 residues long: D-aminoacyl-tRNA deacylase (148 aa).

A Gly-cisPro motif, important for rejection of L-amino acids motif is present at residues 137 to 138; sequence GP.

This sequence belongs to the DTD family. In terms of assembly, homodimer.

The protein localises to the cytoplasm. The enzyme catalyses glycyl-tRNA(Ala) + H2O = tRNA(Ala) + glycine + H(+). It carries out the reaction a D-aminoacyl-tRNA + H2O = a tRNA + a D-alpha-amino acid + H(+). An aminoacyl-tRNA editing enzyme that deacylates mischarged D-aminoacyl-tRNAs. Also deacylates mischarged glycyl-tRNA(Ala), protecting cells against glycine mischarging by AlaRS. Acts via tRNA-based rather than protein-based catalysis; rejects L-amino acids rather than detecting D-amino acids in the active site. By recycling D-aminoacyl-tRNA to D-amino acids and free tRNA molecules, this enzyme counteracts the toxicity associated with the formation of D-aminoacyl-tRNA entities in vivo and helps enforce protein L-homochirality. This is D-aminoacyl-tRNA deacylase from Oenococcus oeni (strain ATCC BAA-331 / PSU-1).